We begin with the raw amino-acid sequence, 515 residues long: MGQGSSKHADSKLDSYPSFSRSDTQGSIKSLKSLKTVLGKGKDSNHDRRTSTDTTHSRHRYPETPPSLPPPPSPGILATSPAVLQKHQQEDSGNSSQSPTSPHPSNQPAMLSPSTAASQHHHHHSSSSSYAVSPTSPTSPTSSGPIGSNFDSASEHNGPVYPQDQQGPVIIPNSAISSTDPDDPETVVSLNVDEMIQRLIHVGYSRKSSKSVCLKNAEITSICMAVREIFLSQPTLLELTPPVKIVGDVHGQYSDLIRLFEMCGFPPSSNYLFLGDYVDRGKQSLETILLLFLYKIRYPENFFLLRGNHECANITRVYGFYDECKRRCNIKIWKTFINTFNCLPIASVVAGKIFCVHGGLSPSLSHMDDIREIPRPTDVPDYGLLNDLLWSDPADTENDWEDNERGVSFVFNKNVIRQFLAKHDFDLICRAHMVVEDGYEFFNDRTLCTVFSAPNYCGEFDNWGAVMSVNSELLCSFELIKPLDQAAIRRELKKSKRSGMAIYQSPPAEQVTQSV.

Positions 1 to 186 (MGQGSSKHAD…SSTDPDDPET (186 aa)) are disordered. A compositionally biased stretch (polar residues) spans 17-30 (PSFSRSDTQGSIKS). Ser18 is modified (phosphoserine). Residues 40 to 51 (KGKDSNHDRRTS) are compositionally biased toward basic and acidic residues. Over residues 63-74 (ETPPSLPPPPSP) the composition is skewed to pro residues. Residues 91–109 (DSGNSSQSPTSPHPSNQPA) are compositionally biased toward polar residues. Positions 126–143 (SSSSYAVSPTSPTSPTSS) are enriched in low complexity. Mn(2+)-binding residues include Asp248, His250, Asp276, and Asn308. Residue His309 is the Proton donor of the active site. Residues His357 and His432 each coordinate Mn(2+). 2 positions are modified to phosphoserine: Ser505 and Ser514.

It belongs to the PPP phosphatase family. PP-Z subfamily. Mn(2+) serves as cofactor.

The protein resides in the cytoplasm. It carries out the reaction O-phospho-L-seryl-[protein] + H2O = L-seryl-[protein] + phosphate. It catalyses the reaction O-phospho-L-threonyl-[protein] + H2O = L-threonyl-[protein] + phosphate. In Schizosaccharomyces pombe (strain 972 / ATCC 24843) (Fission yeast), this protein is Serine/threonine-protein phosphatase PP-Z (pzh1).